A 547-amino-acid chain; its full sequence is Chaperonin GroEL (547 aa).

Residues 30-33 (TLGP), Lys-51, 87-91 (DGTTT), Gly-415, 480-482 (NAA), and Asp-496 each bind ATP. The interval 525–547 (KPDDKPAMPPMGGGMGGMGGMDF) is disordered. Over residues 535–547 (MGGGMGGMGGMDF) the composition is skewed to gly residues.

The protein belongs to the chaperonin (HSP60) family. As to quaternary structure, forms a cylinder of 14 subunits composed of two heptameric rings stacked back-to-back. Interacts with the co-chaperonin GroES.

It localises to the cytoplasm. The catalysed reaction is ATP + H2O + a folded polypeptide = ADP + phosphate + an unfolded polypeptide.. Together with its co-chaperonin GroES, plays an essential role in assisting protein folding. The GroEL-GroES system forms a nano-cage that allows encapsulation of the non-native substrate proteins and provides a physical environment optimized to promote and accelerate protein folding. In Novosphingobium aromaticivorans (strain ATCC 700278 / DSM 12444 / CCUG 56034 / CIP 105152 / NBRC 16084 / F199), this protein is Chaperonin GroEL.